Here is a 257-residue protein sequence, read N- to C-terminus: 5'-nucleotidase SurE (257 aa).

Residues aspartate 9, aspartate 10, serine 40, and asparagine 92 each contribute to the a divalent metal cation site.

This sequence belongs to the SurE nucleotidase family. A divalent metal cation is required as a cofactor.

The protein resides in the cytoplasm. It carries out the reaction a ribonucleoside 5'-phosphate + H2O = a ribonucleoside + phosphate. Functionally, nucleotidase that shows phosphatase activity on nucleoside 5'-monophosphates. This Alkalilimnicola ehrlichii (strain ATCC BAA-1101 / DSM 17681 / MLHE-1) protein is 5'-nucleotidase SurE.